Here is a 547-residue protein sequence, read N- to C-terminus: Chaperonin GroEL (547 aa).

ATP contacts are provided by residues 30–33 (TLGP), Lys51, 87–91 (DGTTT), Gly415, 479–481 (NAA), and Asp495. Positions 526 to 547 (KKDEPTPPAAGGGMGGMGGMDF) are disordered. The span at 535–547 (AGGGMGGMGGMDF) shows a compositional bias: gly residues.

This sequence belongs to the chaperonin (HSP60) family. Forms a cylinder of 14 subunits composed of two heptameric rings stacked back-to-back. Interacts with the co-chaperonin GroES.

It is found in the cytoplasm. It catalyses the reaction ATP + H2O + a folded polypeptide = ADP + phosphate + an unfolded polypeptide.. Together with its co-chaperonin GroES, plays an essential role in assisting protein folding. The GroEL-GroES system forms a nano-cage that allows encapsulation of the non-native substrate proteins and provides a physical environment optimized to promote and accelerate protein folding. The protein is Chaperonin GroEL of Xylella fastidiosa (strain M12).